Reading from the N-terminus, the 424-residue chain is UPF0415 protein C7orf25 homolog (424 aa).

This sequence belongs to the UPF0415 family.

In Xenopus tropicalis (Western clawed frog), this protein is UPF0415 protein C7orf25 homolog.